We begin with the raw amino-acid sequence, 750 residues long: Photosystem I P700 chlorophyll a apoprotein A1 (750 aa).

Helical transmembrane passes span 70–93 (VFSAHFGQLSIIFLWLSGMYFHGA), 156–179 (LYCTAIGALVFAALMLFAGWFHYH), 195–219 (LNHHLAGLLGLGSLSWAGHQVHVSL), 291–309 (IAHHHLAIAILFLIAGHMY), 346–369 (WHAQLSLNLAMLGSLTIVVAHHMY), 385–411 (LSLFTHHMWIGGFLIVGAAAHAAIFMV), 433–455 (AIISHLNWVCIFLGFHSFGLYIH), and 531–549 (FLVHHIHAFTIHVTVLILL). Residues C573 and C582 each contribute to the [4Fe-4S] cluster site. The next 2 membrane-spanning stretches (helical) occupy residues 589–610 (HVFLGLFWMYNAISVVIFHFSW) and 664–686 (LSAYGLFFLGAHFVWAFSLMFLF). Chlorophyll a' is bound at residue H675. M683 and Y691 together coordinate chlorophyll a. W692 is a phylloquinone binding site. A helical transmembrane segment spans residues 724 to 744 (AVGVTHYLLGGIATTWAFFLA).

It belongs to the PsaA/PsaB family. In terms of assembly, the PsaA/B heterodimer binds the P700 chlorophyll special pair and subsequent electron acceptors. PSI consists of a core antenna complex that captures photons, and an electron transfer chain that converts photonic excitation into a charge separation. The eukaryotic PSI reaction center is composed of at least 11 subunits. The cofactor is P700 is a chlorophyll a/chlorophyll a' dimer, A0 is one or more chlorophyll a, A1 is one or both phylloquinones and FX is a shared 4Fe-4S iron-sulfur center..

The protein localises to the plastid. Its subcellular location is the chloroplast thylakoid membrane. The catalysed reaction is reduced [plastocyanin] + hnu + oxidized [2Fe-2S]-[ferredoxin] = oxidized [plastocyanin] + reduced [2Fe-2S]-[ferredoxin]. Functionally, psaA and PsaB bind P700, the primary electron donor of photosystem I (PSI), as well as the electron acceptors A0, A1 and FX. PSI is a plastocyanin-ferredoxin oxidoreductase, converting photonic excitation into a charge separation, which transfers an electron from the donor P700 chlorophyll pair to the spectroscopically characterized acceptors A0, A1, FX, FA and FB in turn. Oxidized P700 is reduced on the lumenal side of the thylakoid membrane by plastocyanin. The polypeptide is Photosystem I P700 chlorophyll a apoprotein A1 (Lobularia maritima (Sweet alyssum)).